A 104-amino-acid polypeptide reads, in one-letter code: Large ribosomal subunit protein uL24 (104 aa).

The protein belongs to the universal ribosomal protein uL24 family. In terms of assembly, part of the 50S ribosomal subunit.

Its function is as follows. One of two assembly initiator proteins, it binds directly to the 5'-end of the 23S rRNA, where it nucleates assembly of the 50S subunit. In terms of biological role, one of the proteins that surrounds the polypeptide exit tunnel on the outside of the subunit. The sequence is that of Large ribosomal subunit protein uL24 from Shigella flexneri.